Reading from the N-terminus, the 155-residue chain is Large ribosomal subunit protein uL13 (155 aa).

The protein belongs to the universal ribosomal protein uL13 family. In terms of assembly, part of the 50S ribosomal subunit.

Functionally, this protein is one of the early assembly proteins of the 50S ribosomal subunit, although it is not seen to bind rRNA by itself. It is important during the early stages of 50S assembly. The protein is Large ribosomal subunit protein uL13 of Rickettsia rickettsii (strain Iowa).